Consider the following 181-residue polypeptide: Caltractin ICL1d (181 aa).

Residues 1–29 (MARRGQQPPPQQAPPAQKNQTGKFNPAEF) are disordered. EF-hand domains follow at residues 37-72 (EEVLEIKEAFDLFDTDGTQSIDPKELKAAMTSLGFE), 73-108 (AKNQTIYQMISDLDTDGSGQIDFAEFLKLMTARISE), 110-145 (DSKADIQKVFNLFDSERAGVITLKDLRKVAKELGET), and 146-181 (MDDSELQEMIDRADSDGDAQVTFEDFYNIMTKKTFA). Positions 50, 52, 54, 56, 61, 86, 88, 90, 92, and 97 each coordinate Ca(2+).

It belongs to the centrin family. In terms of assembly, monomer.

It is found in the cytoplasm. The protein localises to the cytoskeleton. Functionally, plays a fundamental role in microtubule organizing center structure and function. Component of the infraciliary lattice (ICL) and the ciliary basal bodies. The chain is Caltractin ICL1d (Icl1d) from Paramecium tetraurelia.